Here is a 160-residue protein sequence, read N- to C-terminus: Phosphopantetheine adenylyltransferase (160 aa).

Threonine 10 is a substrate binding site. ATP-binding positions include threonine 10–phenylalanine 11 and histidine 18. Substrate contacts are provided by lysine 42, leucine 74, and arginine 88. ATP-binding positions include glycine 89 to arginine 91, glutamate 99, and histidine 124 to threonine 130.

The protein belongs to the bacterial CoaD family. As to quaternary structure, homohexamer. Requires Mg(2+) as cofactor.

The protein resides in the cytoplasm. It carries out the reaction (R)-4'-phosphopantetheine + ATP + H(+) = 3'-dephospho-CoA + diphosphate. The protein operates within cofactor biosynthesis; coenzyme A biosynthesis; CoA from (R)-pantothenate: step 4/5. In terms of biological role, reversibly transfers an adenylyl group from ATP to 4'-phosphopantetheine, yielding dephospho-CoA (dPCoA) and pyrophosphate. This chain is Phosphopantetheine adenylyltransferase, found in Aliivibrio fischeri (strain MJ11) (Vibrio fischeri).